A 333-amino-acid polypeptide reads, in one-letter code: Protoheme IX farnesyltransferase (333 aa).

The next 7 helical transmembrane spans lie at 64 to 84 (LICT…LNCL), 110 to 130 (TVFL…ISGV), 133 to 153 (LAAG…TVIL), 161 to 181 (IVFG…AATG), 189 to 209 (WLFG…AILL), 246 to 266 (IMGV…LLPF), and 287 to 307 (AKSL…LLLI).

The protein belongs to the UbiA prenyltransferase family. Protoheme IX farnesyltransferase subfamily.

Its subcellular location is the cell inner membrane. The enzyme catalyses heme b + (2E,6E)-farnesyl diphosphate + H2O = Fe(II)-heme o + diphosphate. It functions in the pathway porphyrin-containing compound metabolism; heme O biosynthesis; heme O from protoheme: step 1/1. Converts heme B (protoheme IX) to heme O by substitution of the vinyl group on carbon 2 of heme B porphyrin ring with a hydroxyethyl farnesyl side group. This Prochlorococcus marinus (strain MIT 9312) protein is Protoheme IX farnesyltransferase.